Consider the following 699-residue polypeptide: Polyribonucleotide nucleotidyltransferase (699 aa).

Residues Asp493 and Asp499 each contribute to the Mg(2+) site. In terms of domain architecture, KH spans 560–620; the sequence is PLIANIEIDP…NKVNQAIEYI (61 aa). The S1 motif domain occupies 630–697; sequence GDMFEGKITR…DSGRIQLGKA (68 aa).

This sequence belongs to the polyribonucleotide nucleotidyltransferase family. Mg(2+) is required as a cofactor.

It localises to the cytoplasm. The catalysed reaction is RNA(n+1) + phosphate = RNA(n) + a ribonucleoside 5'-diphosphate. In terms of biological role, involved in mRNA degradation. Catalyzes the phosphorolysis of single-stranded polyribonucleotides processively in the 3'- to 5'-direction. The polypeptide is Polyribonucleotide nucleotidyltransferase (Thermosipho melanesiensis (strain DSM 12029 / CIP 104789 / BI429)).